The primary structure comprises 483 residues: Fructose-like PTS system EIIBC component (483 aa).

The PTS EIIB type-2 domain maps to 1-105 (MESSLRIVAI…IDQIFSELPT (105 aa)). Catalysis depends on Cys13, which acts as the Phosphocysteine intermediate; for EIIB activity. A Phosphocysteine; by EIIA modification is found at Cys13. Residues 128–475 (VMSHLMAGVS…LWLRRKAKAA (348 aa)) form the PTS EIIC type-2 domain. The next 10 helical transmembrane spans lie at 132-152 (LMAG…LVAL), 180-200 (IGYL…ASSI), 204-224 (PAFA…LLGT), 227-247 (GAGF…VFWF), 264-284 (LIPF…IGPV), 303-323 (MKFA…GGPI), 344-364 (AIVG…TFIA), 380-400 (IVVG…AAPL), 402-422 (MITA…AFGI), and 442-462 (VGSF…FIIV).

The protein resides in the cell inner membrane. The catalysed reaction is D-fructose(out) + N(pros)-phospho-L-histidyl-[protein] = D-fructose 1-phosphate(in) + L-histidyl-[protein]. The phosphoenolpyruvate-dependent sugar phosphotransferase system (sugar PTS), a major carbohydrate active transport system, catalyzes the phosphorylation of incoming sugar substrates concomitantly with their translocation across the cell membrane. The enzyme II FrvAB PTS system is involved in fructose transport. The protein is Fructose-like PTS system EIIBC component of Escherichia coli (strain K12).